We begin with the raw amino-acid sequence, 290 residues long: Glycine--tRNA ligase alpha subunit (290 aa).

This sequence belongs to the class-II aminoacyl-tRNA synthetase family. In terms of assembly, tetramer of two alpha and two beta subunits.

The protein resides in the cytoplasm. The catalysed reaction is tRNA(Gly) + glycine + ATP = glycyl-tRNA(Gly) + AMP + diphosphate. The sequence is that of Glycine--tRNA ligase alpha subunit from Prochlorococcus marinus (strain NATL1A).